Consider the following 158-residue polypeptide: C-type lectin lectoxin-Enh4 (158 aa).

The signal sequence occupies residues 1–23 (MGQFTVVSLGLLAMFLSLSGAKG). Intrachain disulfides connect Cys-26-Cys-37, Cys-54-Cys-154, and Cys-129-Cys-146. One can recognise a C-type lectin domain in the interval 33–155 (RNGVCNKLFP…CASLHPFICQ (123 aa)). The Mannose-binding motif lies at 119-121 (EPN). Ca(2+)-binding residues include Glu-127, Asn-142, and Asp-143.

This sequence belongs to the true venom lectin family. In terms of tissue distribution, expressed by the venom gland.

The protein resides in the secreted. In terms of biological role, mannose-binding lectin which recognizes specific carbohydrate structures and agglutinates a variety of animal cells by binding to cell-surface glycoproteins and glycolipids. May be a calcium-dependent lectin. In Pseudoferania polylepis (Macleay's water snake), this protein is C-type lectin lectoxin-Enh4.